A 705-amino-acid chain; its full sequence is Elongation factor G (705 aa).

One can recognise a tr-type G domain in the interval 8–290; sequence HRYRNIGIMA…GVIHLLPSPA (283 aa). Residues 17–24, 88–92, and 142–145 contribute to the GTP site; these read AHIDAGKT, DTPGH, and NKMD.

It belongs to the TRAFAC class translation factor GTPase superfamily. Classic translation factor GTPase family. EF-G/EF-2 subfamily.

It is found in the cytoplasm. Catalyzes the GTP-dependent ribosomal translocation step during translation elongation. During this step, the ribosome changes from the pre-translocational (PRE) to the post-translocational (POST) state as the newly formed A-site-bound peptidyl-tRNA and P-site-bound deacylated tRNA move to the P and E sites, respectively. Catalyzes the coordinated movement of the two tRNA molecules, the mRNA and conformational changes in the ribosome. This is Elongation factor G from Xylella fastidiosa (strain M23).